A 274-amino-acid chain; its full sequence is Energy-coupling factor transporter ATP-binding protein EcfA1 (274 aa).

Residues 9 to 240 (CSFINVAFSY…EQELQKIRLD (232 aa)) form the ABC transporter domain. 41-48 (GHNGSGKS) serves as a coordination point for ATP.

This sequence belongs to the ABC transporter superfamily. Energy-coupling factor EcfA family. Forms a stable energy-coupling factor (ECF) transporter complex composed of 2 membrane-embedded substrate-binding proteins (S component), 2 ATP-binding proteins (A component) and 2 transmembrane proteins (T component).

The protein resides in the cell membrane. In terms of biological role, ATP-binding (A) component of a common energy-coupling factor (ECF) ABC-transporter complex. Unlike classic ABC transporters this ECF transporter provides the energy necessary to transport a number of different substrates. The sequence is that of Energy-coupling factor transporter ATP-binding protein EcfA1 from Mycoplasma genitalium (strain ATCC 33530 / DSM 19775 / NCTC 10195 / G37) (Mycoplasmoides genitalium).